A 433-amino-acid chain; its full sequence is ATP-dependent RNA helicase SUB2 (433 aa).

The short motif at 49–77 is the Q motif element; the sequence is TGFRDFLLKPELLRAIGDCGFEHPSEVQQ. In terms of domain architecture, Helicase ATP-binding spans 80–255; that stretch reads IPQSILGTDV…KKFMQNPLEI (176 aa). Position 93 to 100 (93 to 100) interacts with ATP; the sequence is AKSGLGKT. Positions 202 to 205 match the DEAD box motif; sequence DECD. The region spanning 267 to 428 is the Helicase C-terminal domain; that stretch reads GLQQYYIKLE…EFPEEGVDPS (162 aa).

Belongs to the DEAD box helicase family. DECD subfamily.

It localises to the nucleus. The enzyme catalyses ATP + H2O = ADP + phosphate + H(+). Its function is as follows. ATP-binding RNA helicase involved in transcription elongation and required for the export of mRNA out of the nucleus. SUB2 also plays a role in pre-mRNA splicing and spliceosome assembly. May be involved in rDNA and telomeric silencing, and maintenance of genome integrity. This Scheffersomyces stipitis (strain ATCC 58785 / CBS 6054 / NBRC 10063 / NRRL Y-11545) (Yeast) protein is ATP-dependent RNA helicase SUB2 (SUB2).